The primary structure comprises 506 residues: Proline--tRNA ligase (506 aa).

It belongs to the class-II aminoacyl-tRNA synthetase family. ProS type 3 subfamily. In terms of assembly, homodimer.

It is found in the cytoplasm. It catalyses the reaction tRNA(Pro) + L-proline + ATP = L-prolyl-tRNA(Pro) + AMP + diphosphate. In terms of biological role, catalyzes the attachment of proline to tRNA(Pro) in a two-step reaction: proline is first activated by ATP to form Pro-AMP and then transferred to the acceptor end of tRNA(Pro). The protein is Proline--tRNA ligase of Akkermansia muciniphila (strain ATCC BAA-835 / DSM 22959 / JCM 33894 / BCRC 81048 / CCUG 64013 / CIP 107961 / Muc).